A 70-amino-acid polypeptide reads, in one-letter code: UPF0270 protein VV1_1320 (70 aa).

This sequence belongs to the UPF0270 family.

The chain is UPF0270 protein VV1_1320 from Vibrio vulnificus (strain CMCP6).